A 122-amino-acid chain; its full sequence is PA-I galactophilic lectin (122 aa).

This sequence belongs to the LecA/PllA lectin family.

Its subcellular location is the cytoplasm. It is found in the periplasm. The protein localises to the cell surface. Its function is as follows. D-galactose specific lectin. Binds in decreasing order of affinity: melibiose, methyl-alpha-D-galactoside, D-galactose, methyl-beta-D-galactoside, N-acetyl-D-galactosamine. Similar to plant lectins in its selective (carbohydrate-specific) hemagglutinating activity. This Pseudomonas aeruginosa (strain ATCC 15692 / DSM 22644 / CIP 104116 / JCM 14847 / LMG 12228 / 1C / PRS 101 / PAO1) protein is PA-I galactophilic lectin (lecA).